The chain runs to 186 residues: Putative manganese efflux pump MntP (186 aa).

The next 6 membrane-spanning stretches (helical) occupy residues 1–21 (MSFLTNFLLGLGLAMDAFAVS), 39–59 (LAVFFGSFQAMMPVLGWIGGS), 61–81 (VSSFVSDYAPWIAFLLLAFIG), 102–122 (YSVLFLLAVATSIDALAVGMS), 134–156 (VIIIGCVTFVMSFCGAILGYRLG), and 165–185 (ILGGLILIGLGGKILAEHMLW).

This sequence belongs to the MntP (TC 9.B.29) family.

Its subcellular location is the cell membrane. Functionally, probably functions as a manganese efflux pump. The protein is Putative manganese efflux pump MntP of Methanosarcina acetivorans (strain ATCC 35395 / DSM 2834 / JCM 12185 / C2A).